A 119-amino-acid chain; its full sequence is uncharacterized protein (119 aa).

2 helical membrane passes run 53–73 (AATI…SFLA) and 92–112 (FITH…WFLF).

It is found in the membrane. This is an uncharacterized protein from Saccharomyces cerevisiae (strain ATCC 204508 / S288c) (Baker's yeast).